The sequence spans 215 residues: Ribonuclease HII (215 aa).

Positions 19 to 213 (QTVAGVDEVG…SLRQPSQQID (195 aa)) constitute an RNase H type-2 domain. A divalent metal cation-binding residues include aspartate 25, glutamate 26, and aspartate 121.

The protein belongs to the RNase HII family. Requires Mn(2+) as cofactor. Mg(2+) serves as cofactor.

It is found in the cytoplasm. It carries out the reaction Endonucleolytic cleavage to 5'-phosphomonoester.. In terms of biological role, endonuclease that specifically degrades the RNA of RNA-DNA hybrids. This is Ribonuclease HII from Synechococcus elongatus (strain ATCC 33912 / PCC 7942 / FACHB-805) (Anacystis nidulans R2).